A 263-amino-acid chain; its full sequence is Hemin import ATP-binding protein HmuV (263 aa).

In terms of domain architecture, ABC transporter spans 2–242; it reads IEARDVSVDI…DLIEKVFDCR (241 aa). Position 34 to 41 (34 to 41) interacts with ATP; sequence GPNGSGKT.

Belongs to the ABC transporter superfamily. Heme (hemin) importer (TC 3.A.1.14.5) family. In terms of assembly, the complex is composed of two ATP-binding proteins (HmuV), two transmembrane proteins (HmuU) and a solute-binding protein (HmuT).

It localises to the cell inner membrane. Functionally, part of the ABC transporter complex HmuTUV involved in hemin import. Responsible for energy coupling to the transport system. This is Hemin import ATP-binding protein HmuV from Mesorhizobium japonicum (strain LMG 29417 / CECT 9101 / MAFF 303099) (Mesorhizobium loti (strain MAFF 303099)).